Here is a 221-residue protein sequence, read N- to C-terminus: ATP phosphoribosyltransferase (221 aa).

This sequence belongs to the ATP phosphoribosyltransferase family. Short subfamily. As to quaternary structure, heteromultimer composed of HisG and HisZ subunits.

It localises to the cytoplasm. It catalyses the reaction 1-(5-phospho-beta-D-ribosyl)-ATP + diphosphate = 5-phospho-alpha-D-ribose 1-diphosphate + ATP. Its pathway is amino-acid biosynthesis; L-histidine biosynthesis; L-histidine from 5-phospho-alpha-D-ribose 1-diphosphate: step 1/9. In terms of biological role, catalyzes the condensation of ATP and 5-phosphoribose 1-diphosphate to form N'-(5'-phosphoribosyl)-ATP (PR-ATP). Has a crucial role in the pathway because the rate of histidine biosynthesis seems to be controlled primarily by regulation of HisG enzymatic activity. In Anaeromyxobacter sp. (strain K), this protein is ATP phosphoribosyltransferase.